An 815-amino-acid chain; its full sequence is Lon protease 1 (815 aa).

A Lon N-terminal domain is found at 19–212; that stretch reads MPLLPLRDIV…KLFGQIRSEI (194 aa). 364–371 contacts ATP; it reads GPPGVGKT. Residues 601 to 782 enclose the Lon proteolytic domain; it reads KDEIGLAVGL…DDVLRKAMVV (182 aa). Catalysis depends on residues Ser-688 and Lys-731. The interval 793–815 is disordered; that stretch reads EAGAQQAVMFEQKPPAADEIRAH.

It belongs to the peptidase S16 family. Homohexamer. Organized in a ring with a central cavity.

It localises to the cytoplasm. The catalysed reaction is Hydrolysis of proteins in presence of ATP.. In terms of biological role, ATP-dependent serine protease that mediates the selective degradation of mutant and abnormal proteins as well as certain short-lived regulatory proteins. Required for cellular homeostasis and for survival from DNA damage and developmental changes induced by stress. Degrades polypeptides processively to yield small peptide fragments that are 5 to 10 amino acids long. Binds to DNA in a double-stranded, site-specific manner. This chain is Lon protease 1, found in Syntrophobacter fumaroxidans (strain DSM 10017 / MPOB).